A 180-amino-acid polypeptide reads, in one-letter code: Acireductone dioxygenase (180 aa).

Residues H97, H99, E103, and H141 each coordinate Fe(2+). Ni(2+)-binding residues include H97, H99, E103, and H141.

The protein belongs to the acireductone dioxygenase (ARD) family. Monomer. Fe(2+) is required as a cofactor. Requires Ni(2+) as cofactor.

The catalysed reaction is 1,2-dihydroxy-5-(methylsulfanyl)pent-1-en-3-one + O2 = 3-(methylsulfanyl)propanoate + CO + formate + 2 H(+). The enzyme catalyses 1,2-dihydroxy-5-(methylsulfanyl)pent-1-en-3-one + O2 = 4-methylsulfanyl-2-oxobutanoate + formate + 2 H(+). It participates in amino-acid biosynthesis; L-methionine biosynthesis via salvage pathway; L-methionine from S-methyl-5-thio-alpha-D-ribose 1-phosphate: step 5/6. Catalyzes 2 different reactions between oxygen and the acireductone 1,2-dihydroxy-3-keto-5-methylthiopentene (DHK-MTPene) depending upon the metal bound in the active site. Fe-containing acireductone dioxygenase (Fe-ARD) produces formate and 2-keto-4-methylthiobutyrate (KMTB), the alpha-ketoacid precursor of methionine in the methionine recycle pathway. Ni-containing acireductone dioxygenase (Ni-ARD) produces methylthiopropionate, carbon monoxide and formate, and does not lie on the methionine recycle pathway. The polypeptide is Acireductone dioxygenase (Serratia proteamaculans (strain 568)).